The chain runs to 789 residues: Disintegrin and metalloproteinase domain-containing protein 7 (789 aa).

An N-terminal signal peptide occupies residues 1–23 (MLTTGIFWMTVLISHIQERGIVG). The propeptide occupies 24 to 176 (VEGQELVHPK…NHSCVGLNFT (153 aa)). Over 24-667 (VEGQELVHPK…EWGEALNLTS (644 aa)) the chain is Extracellular. Asn-84, Asn-167, and Asn-174 each carry an N-linked (GlcNAc...) asparagine glycan. One can recognise a Peptidase M12B domain in the interval 199-393 (KFIELFVVAD…QKPACILNNP (195 aa)). Disulfide bonds link Cys-310–Cys-388, Cys-350–Cys-372, Cys-352–Cys-357, and Cys-459–Cys-479. Residues 401-487 (YPFCGNKKVD…ECPKDEFQAN (87 aa)) form the Disintegrin domain. N-linked (GlcNAc...) asparagine glycans are attached at residues Asn-583, Asn-628, and Asn-664. Residues 668 to 689 (VSIMVIVLVMVIIGVGLVILLI) form a helical membrane-spanning segment. Over 690-789 (RYQKCIKMKQ…DTQSGCERLG (100 aa)) the chain is Cytoplasmic. The segment at 764-789 (RGIADPKQTDNVNLNLDTQSGCERLG) is disordered. The segment covering 772-789 (TDNVNLNLDTQSGCERLG) has biased composition (polar residues).

Interacts with ITM2B in sperm; the interaction increases following capacitation. Interacts with HSPA5 and CANX. In terms of tissue distribution, expressed in both the head and tails of sperm (at protein level). Expressed in the epididymis (at protein level). Abundantly expressed in the apical region of the proximal caput epididymal epithelium, with decreasing expression in the mid and distal caput epididymal epithelium.

It is found in the membrane. Functionally, required for normal male fertility via maintenance of epithelial cell morphology in the caput epididymis and subsequently correct epididymis lumen structure required for sperm development. Plays a role in sperm motility, flagella morphology and tyrosine phosphorylation during sperm capacitance. Plays a role in normal expression levels of HSPA5, ITM2B and ADAM2 in sperm both prior to and post-capacitation. This is a non catalytic metalloprotease-like protein. This chain is Disintegrin and metalloproteinase domain-containing protein 7, found in Mus musculus (Mouse).